Consider the following 395-residue polypeptide: MTSILTNNSAMAALSTLRSISSSMEDTQSRISSGLRVGSASDNAAYWSIATTMRSDNQALSAVQDALGLGAAKVDTAYSGMESAIEVVKEIKAKLVAATEDGVDKAKIQEEITQLKDQLTSIADAASFSGENWLQADLSGGAVTKSVVGSFVRDGSGSVAVKKVDYSLNANSVLFDTVGDTGILDKVYNVSQASVTLTVNTNGVESQHTVAAYSLESLTEAGAEFQGNYALQGGNSYVKVENVWVRAETAATGATGQEIAATTTAAGTITADSWVVDVGNAPAANVSAGQSVANINIVGMGAAALDALISGVDAALTDMTSAAASLGSISSRIDLQSEFVNKLSDSIESGVGRLVDADMNEESTRLKALQTQQQLAIQALSIANSDSQNVLSLFR.

Belongs to the bacterial flagellin family.

The protein localises to the secreted. It localises to the bacterial flagellum. Flagellin is the subunit protein which polymerizes to form the filaments of bacterial flagella. Homomer of FlaA is able to form a functional filament. The polypeptide is Flagellin A (flaA) (Rhizobium meliloti (Ensifer meliloti)).